The sequence spans 257 residues: DNA repair protein RecO (257 aa).

The protein belongs to the RecO family.

Its function is as follows. Involved in DNA repair and RecF pathway recombination. The sequence is that of DNA repair protein RecO from Streptococcus sanguinis (strain SK36).